The following is a 223-amino-acid chain: Peroxynitrite isomerase 1 (223 aa).

A GXWXGXG motif is present at residues 69 to 75 (GVWRGEG). Residues Lys-186 and His-213 each coordinate heme b.

This sequence belongs to the nitrobindin family. As to quaternary structure, homodimer. The cofactor is heme b.

The catalysed reaction is peroxynitrite = nitrate. It participates in nitrogen metabolism. Its function is as follows. Heme-binding protein able to scavenge peroxynitrite and to protect free L-tyrosine against peroxynitrite-mediated nitration, by acting as a peroxynitrite isomerase that converts peroxynitrite to nitrate. Therefore, this protein likely plays a role in peroxynitrite sensing and in the detoxification of reactive nitrogen and oxygen species (RNS and ROS, respectively). Is able to bind nitric oxide (NO) in vitro, but may act as a sensor of peroxynitrite levels in vivo. The protein is Peroxynitrite isomerase 1 of Mycobacterium marinum (strain ATCC BAA-535 / M).